The following is an 84-amino-acid chain: uncharacterized protein (84 aa).

This is an uncharacterized protein from Lepidoptera (butterflies and moths).